A 332-amino-acid polypeptide reads, in one-letter code: Ribose-phosphate pyrophosphokinase (332 aa).

Position 57-59 (57-59 (DGE)) interacts with ATP. Residues His150 and Asp189 each contribute to the Mg(2+) site. The active site involves Lys213. Residues Arg215, Asp239, and 243 to 247 (DTAGT) contribute to the D-ribose 5-phosphate site.

Belongs to the ribose-phosphate pyrophosphokinase family. Class I subfamily. As to quaternary structure, homohexamer. It depends on Mg(2+) as a cofactor.

The protein localises to the cytoplasm. The catalysed reaction is D-ribose 5-phosphate + ATP = 5-phospho-alpha-D-ribose 1-diphosphate + AMP + H(+). Its pathway is metabolic intermediate biosynthesis; 5-phospho-alpha-D-ribose 1-diphosphate biosynthesis; 5-phospho-alpha-D-ribose 1-diphosphate from D-ribose 5-phosphate (route I): step 1/1. Functionally, involved in the biosynthesis of the central metabolite phospho-alpha-D-ribosyl-1-pyrophosphate (PRPP) via the transfer of pyrophosphoryl group from ATP to 1-hydroxyl of ribose-5-phosphate (Rib-5-P). The polypeptide is Ribose-phosphate pyrophosphokinase (Gloeobacter violaceus (strain ATCC 29082 / PCC 7421)).